The following is a 160-amino-acid chain: MDVTLPHHVVEDILERLPVKTLRKFKCVCSTWRSTIDSQRFKDRHMIHGQLLEDPDILLLGRWDPPSLSKNASLMTLTFDSSTMPFSFKIQTIPGKANFYKVTQSHSKSLKVVTVYDSNMEATGLVLYDMTQSERTFANFCLSFKNRETPTAYFPSLITI.

In terms of domain architecture, F-box spans 1-44 (MDVTLPHHVVEDILERLPVKTLRKFKCVCSTWRSTIDSQRFKDR).

This chain is F-box protein At1g15015, found in Arabidopsis thaliana (Mouse-ear cress).